A 505-amino-acid chain; its full sequence is Lysine--tRNA ligase (505 aa).

Residues glutamate 415 and glutamate 422 each coordinate Mg(2+).

The protein belongs to the class-II aminoacyl-tRNA synthetase family. As to quaternary structure, homodimer. It depends on Mg(2+) as a cofactor.

The protein localises to the cytoplasm. The enzyme catalyses tRNA(Lys) + L-lysine + ATP = L-lysyl-tRNA(Lys) + AMP + diphosphate. This is Lysine--tRNA ligase from Yersinia pseudotuberculosis serotype O:1b (strain IP 31758).